Here is a 457-residue protein sequence, read N- to C-terminus: GTPase Era, mitochondrial (457 aa).

The transit peptide at 1 to 18 directs the protein to the mitochondrion; sequence MAFRVSISTFGKSLRVRR. The Era-type G domain occupies 107–350; it reads KVLRVAIIGA…RYLVVGAKPG (244 aa). The interval 115-122 is G1; that stretch reads GAPNAGKS. GTP is bound at residue 115–122; the sequence is GAPNAGKS. The interval 141 to 145 is G2; that stretch reads HTTRA. Residues 162-165 form a G3 region; sequence DTPG. Residues 162–166 and 231–234 each bind GTP; these read DTPGL and NKVD. A G4 region spans residues 231–234; the sequence is NKVD. Basic and acidic residues predominate over residues 270-290; it reads AERRTDREARTSGSGDEEKPG. Residues 270 to 300 are disordered; that stretch reads AERRTDREARTSGSGDEEKPGGDVADGEGSE. Residues 328–330 are G5; the sequence is VSA. Positions 376 to 457 constitute a KH type-2 domain; it reads LLEYLPKEVP…KLRLSVKVKN (82 aa).

Belongs to the TRAFAC class TrmE-Era-EngA-EngB-Septin-like GTPase superfamily. Era GTPase family.

It localises to the mitochondrion matrix. The protein localises to the mitochondrion inner membrane. Functionally, probable GTPase that plays a role in the mitochondrial ribosomal small subunit assembly. Specifically binds the 12S mitochondrial rRNA (12S mt-rRNA) to a 33 nucleotide section delineating the 3' terminal stem-loop region. May act as a chaperone that protects the 12S mt-rRNA on the 28S mitoribosomal subunit during ribosomal small subunit assembly. The sequence is that of GTPase Era, mitochondrial (eral1) from Salmo salar (Atlantic salmon).